The following is a 781-amino-acid chain: ATP-dependent RNA helicase rok1 (781 aa).

Disordered stretches follow at residues 7–108 (LSRG…KPKL) and 134–177 (QDEA…IYPQ). The segment covering 48-57 (KRGKKRKRKG) has biased composition (basic residues). A compositionally biased stretch (acidic residues) spans 66–75 (SGDEDDDASD). Composition is skewed to basic and acidic residues over residues 84–108 (TPEE…KPKL) and 139–173 (TEEK…DKKQ). A Q motif motif is present at residues 184-212 (ELKYTYGIHPVLADNITRQGFRVPTEVQM). The Helicase ATP-binding domain occupies 233 to 487 (DVKVEKGIDF…TKHIDKRAKR (255 aa)). 246-253 (APTGSGKT) is a binding site for ATP. A disordered region spans residues 323–386 (ESNEQEETEQ…SRAKGDQKFK (64 aa)). Residues 339 to 369 (QDSDSDSEAESEPEEVMKIDEEEEEEEESDS) are compositionally biased toward acidic residues. Over residues 370-386 (DAEKKTESRAKGDQKFK) the composition is skewed to basic and acidic residues. Positions 434–437 (DEAD) match the DEAD box motif. Residues 527 to 689 (ALRQLLHPVS…GKDIDEKDTV (163 aa)) enclose the Helicase C-terminal domain. Positions 718-781 (RGVESRRTGG…KAEEEWTGLD (64 aa)) are disordered. Positions 736-752 (SWERRRENNRREAIEAS) are enriched in basic and acidic residues.

This sequence belongs to the DEAD box helicase family. DDX52/ROK1 subfamily. As to quaternary structure, interacts with the U3 snoRNA and is associated with the 90S and 40S pre-ribosomes.

It is found in the nucleus. The protein resides in the nucleolus. It catalyses the reaction ATP + H2O = ADP + phosphate + H(+). Functionally, ATP-dependent RNA helicase involved in 40S ribosomal subunit biogenesis. Required for the processing and cleavage of 35S pre-rRNA at sites A0, A1, and A2, leading to mature 18S rRNA. This Neurospora crassa (strain ATCC 24698 / 74-OR23-1A / CBS 708.71 / DSM 1257 / FGSC 987) protein is ATP-dependent RNA helicase rok1 (drh-16).